The chain runs to 79 residues: Large ribosomal subunit protein uL29 (79 aa).

The protein belongs to the universal ribosomal protein uL29 family.

The polypeptide is Large ribosomal subunit protein uL29 (Tropheryma whipplei (strain TW08/27) (Whipple's bacillus)).